Here is a 546-residue protein sequence, read N- to C-terminus: MLVNTIRQKVSEVISKVYDSEIEFEIEIPPKKEFGDLSTNAAMKLAKTLKKNPREIAQEIVKSLDEDPSFDRIEIMGPGFINFFLSNELLRGVVKTVLERKDEYGRENTGNGVKIQFEYGSANPTGPFTVGHGRQIIIGDVLSEVFKELGYDVTREMYINDAGKQIKLLAQSLWARYNQLLGVEKEIPEGGYRGEYLVDIARDLVSEIGDKYKDLWNEEVEELFKQTALNRILSSMKDTLEKIGSSFDVYFSEKSLIEDGTVEEVLKLLKDRDVVYEKDGAVWLKVSAFIDEEDKVLVRSDGTYTYFMTDIAYHYKKYKRGFRKVYDIWGSDHHGHIPRMKAAMKALDIPDDFFNVILHQFVTLKRDDEIVRMSTRAGEFVTLDELLDEVGRDAVRYFFAMVDPNTHMVFDIDLAKAKSMDNPVYYVQYAHARIYNLFSNAEKKGVKFEEGKHLELLGNEEERVLMRNLGMFNTVLKEVAQMFAPNRLTNYLQSLAESFHAFYTKHVIVDPENPELSNARLNLALATGIVLRKGLKLIGVSAPERM.

The short motif at Ala-122–His-132 is the 'HIGH' region element.

Belongs to the class-I aminoacyl-tRNA synthetase family. As to quaternary structure, monomer.

The protein localises to the cytoplasm. It catalyses the reaction tRNA(Arg) + L-arginine + ATP = L-arginyl-tRNA(Arg) + AMP + diphosphate. In Thermotoga petrophila (strain ATCC BAA-488 / DSM 13995 / JCM 10881 / RKU-1), this protein is Arginine--tRNA ligase.